The sequence spans 101 residues: uncharacterized protein (101 aa).

Positions 76-101 are disordered; sequence KGNVTRRRKKTHLGNDDGKKEAQEKM. Positions 88 to 101 are enriched in basic and acidic residues; sequence LGNDDGKKEAQEKM.

This is an uncharacterized protein from Homo sapiens (Human).